A 23-amino-acid chain; its full sequence is Melittin-related peptide AK-23-1 (23 aa).

A Lysine amide modification is found at K23.

As to expression, expressed by the skin glands.

Its subcellular location is the secreted. The polypeptide is Melittin-related peptide AK-23-1 (Rana arvalis (Moor frog)).